A 399-amino-acid polypeptide reads, in one-letter code: MVNAQSVPTPAHAEYRAQEADHPTSQVAMFAGDQPLPLDCGIDLAPFQIAYQTYGELNAGKSNAILVCHALTGDQHVANVHPVTGKPGWWVTLVGPGKPLDTDKYFVICSNVIGGCMGSTGPASTNPATGTVWGLDFPVITIPDMVRAQAMLIDRLGIDTLFSVVGGSMGGMQVLQWCVAYPQRVFSALPIACSTRHSAQNIAFHELGRQAVMADPDWRDGRYVEQGTYPHRGLGVARMAAHITYLSDAALHRKFGRRMQDRDLPTFSFDADFQVESYLRHQGSSFVERFDANSYLYLTRAMDYFDIAADHNGVLAAAFRDTRTRFCVVSFTSDWLFPTSESRATVHALNAGGARVSFAEIETDRGHDAFLLDLPEFFDIAHAFLVSAGKTRGLAAAGE.

The region spanning 63 to 372 (NAILVCHALT…TDRGHDAFLL (310 aa)) is the AB hydrolase-1 domain. Ser-168 functions as the Nucleophile in the catalytic mechanism. Residue Arg-238 participates in substrate binding. Catalysis depends on residues Asp-334 and His-367. Residue Asp-368 coordinates substrate.

It belongs to the AB hydrolase superfamily. MetX family. Homodimer.

The protein resides in the cytoplasm. It catalyses the reaction L-homoserine + acetyl-CoA = O-acetyl-L-homoserine + CoA. It functions in the pathway amino-acid biosynthesis; L-methionine biosynthesis via de novo pathway; O-acetyl-L-homoserine from L-homoserine: step 1/1. Its function is as follows. Transfers an acetyl group from acetyl-CoA to L-homoserine, forming acetyl-L-homoserine. The polypeptide is Homoserine O-acetyltransferase (Nitrobacter hamburgensis (strain DSM 10229 / NCIMB 13809 / X14)).